Here is a 197-residue protein sequence, read N- to C-terminus: Elongation factor Ts (197 aa).

The segment at 81 to 84 (TDFV) is involved in Mg(2+) ion dislocation from EF-Tu.

Belongs to the EF-Ts family.

It is found in the cytoplasm. In terms of biological role, associates with the EF-Tu.GDP complex and induces the exchange of GDP to GTP. It remains bound to the aminoacyl-tRNA.EF-Tu.GTP complex up to the GTP hydrolysis stage on the ribosome. The chain is Elongation factor Ts from Thermotoga neapolitana (strain ATCC 49049 / DSM 4359 / NBRC 107923 / NS-E).